A 147-amino-acid polypeptide reads, in one-letter code: Anti-sigma F factor (147 aa).

The protein belongs to the anti-sigma-factor family.

The catalysed reaction is L-seryl-[protein] + ATP = O-phospho-L-seryl-[protein] + ADP + H(+). It carries out the reaction L-threonyl-[protein] + ATP = O-phospho-L-threonyl-[protein] + ADP + H(+). Functionally, binds to sigma F and blocks its ability to form an RNA polymerase holoenzyme (E-sigma F). Phosphorylates SpoIIAA on a serine residue. This phosphorylation may enable SpoIIAA to act as an anti-anti-sigma factor that counteracts SpoIIAB and thus releases sigma F from inhibition. In Priestia megaterium (Bacillus megaterium), this protein is Anti-sigma F factor.